We begin with the raw amino-acid sequence, 278 residues long: Chitosanase (278 aa).

An N-terminal signal peptide occupies residues 1–41 (MRLKHPTARLALAALLVAVPRSVAAAGTVHAAPAPAGATRL). Glu-63 (proton donor) is an active-site residue. Asp-81 (nucleophile) is an active-site residue.

The protein belongs to the glycosyl hydrolase 46 family.

It localises to the secreted. The catalysed reaction is Endohydrolysis of beta-(1-&gt;4)-linkages between D-glucosamine residues in a partly acetylated chitosan.. In terms of biological role, aids in the defense against invading fungal pathogens by degrading their cell wall chitosan. The protein is Chitosanase (csn) of Nocardioides sp. (strain N106).